The chain runs to 392 residues: Sex-determining region Y protein (392 aa).

Residues 4-81 (HVKRPMNAFM…YKYQPHRRAK (78 aa)) form a sufficient for interaction with KPNB1 region. Residues 5–73 (VKRPMNAFMV…LHREKYPNYK (69 aa)) constitute a DNA-binding region (HMG box). Required for nuclear localization regions lie at residues 6–22 (KRPM…ERHK) and 75–81 (QPHRRAK). The tract at residues 52-84 (RPFFQEAQRLKILHREKYPNYKYQPHRRAKVSQ) is sufficient for interaction with EP300. The residue at position 81 (Lys-81) is an N6-acetyllysine. A necessary for interaction with ZNF208 isoform KRAB-O region spans residues 92-144 (AVASTKLYNLLQWDRNPHAITYRQDWSRAAHLYSKNQQSFYWQPVDIPTGHLQ). Residues 94–138 (ASTKLYNLLQWDRNPHAITYRQDWSRAAHLYSKNQQSFYWQPVDI) form a necessary for interaction with SLC9A3R2 and nuclear accumulation of SLC9A3R2 region. Positions 142–361 (HLQQQQQQQQ…QQQQQQQQQQ (220 aa)) are disordered. A compositionally biased stretch (low complexity) spans 144–181 (QQQQQQQQQQQFHNHHQQQQQFYDHHQQQQQQQQQQQQ). Composition is skewed to basic and acidic residues over residues 182–197 (FHDH…DHHQ) and 210–228 (QEQQ…HDHQ). Positions 229–238 (QQQQQQQQQQ) are enriched in low complexity. Basic and acidic residues-rich tracts occupy residues 239–250 (FHDHHQQKQQFH), 261–295 (FHDH…HDHP), and 313–349 (QFHD…DHHQ). Residues 350–361 (QQQQQQQQQQQQ) show a composition bias toward low complexity.

It belongs to the SRY family. Interacts with KPNB1, ZNF208 isoform KRAB-O, PARP1 and SLC9A3R2. The interaction with KPNB1 is sensitive to dissociation by Ran in the GTP-bound form. Interaction with PARP1 impaired its DNA-binding activity. Interacts with CALM, EP300, HDAC3 and WT1. The interaction with EP300 modulates its DNA-binding activity. Degraded due to the presence of a degron at the C-terminus that promotes its degradation. In terms of processing, phosphorylated on serine residues by PKA. Phosphorylation by PKA enhances its DNA-binding activity and stimulates transcription repression. Post-translationally, acetylation of Lys-81 contributes to its nuclear localization and enhances its interaction with KPNB1. Poly-ADP-ribosylated by PARP1. ADP-ribosylation reduces its DNA-binding activity. As to expression, expressed in gonadal somatic pre-Sertoli cells. Expressed in the substantia nigra of the brain (at protein level). Expressed in diencephalon, cortex, the substantia nigra of the midbrain and the medial mammillary bodies of the hypothalamus of male, but not female. In terms of tissue distribution, expressed in gonadal somatic pre-Sertoli cells. While it is expressed at lower level compared to isoform Sry-S, this form is more stable and constitutes the predominant protein product of the Sry locus in XY gonads (at protein level).

The protein resides in the nucleus speckle. It is found in the cytoplasm. It localises to the nucleus. Functionally, transcriptional regulator that controls a genetic switch in male development. It is necessary and sufficient for initiating male sex determination by directing the development of supporting cell precursors (pre-Sertoli cells) as Sertoli rather than granulosa cells. Involved in different aspects of gene regulation including promoter activation or repression. Binds to the DNA consensus sequence 5'-[AT]AACAA[AT]-3'. SRY HMG box recognizes DNA by partial intercalation in the minor groove and promotes DNA bending. Also involved in pre-mRNA splicing. In male adult brain involved in the maintenance of motor functions of dopaminergic neurons. Constitutes the major isoform, which is necessary and sufficient for initiating male sex determination. In terms of biological role, constitutes a minor isoform, which is unstable due to the presence of a degron at the C-terminus that promotes its degradation. Not necessary and sufficient for initiating male sex determination. This is Sex-determining region Y protein from Mus musculus (Mouse).